The following is a 320-amino-acid chain: Malate dehydrogenase (320 aa).

Residues 10 to 15 (GAGQIG) and Asp-34 each bind NAD(+). Substrate is bound by residues Arg-83 and Arg-89. Residues Asn-96 and 119-121 (ITN) each bind NAD(+). 2 residues coordinate substrate: Asn-121 and Arg-152. The active-site Proton acceptor is His-176.

This sequence belongs to the LDH/MDH superfamily. MDH type 3 family.

It carries out the reaction (S)-malate + NAD(+) = oxaloacetate + NADH + H(+). Its function is as follows. Catalyzes the reversible oxidation of malate to oxaloacetate. The protein is Malate dehydrogenase of Roseobacter denitrificans (strain ATCC 33942 / OCh 114) (Erythrobacter sp. (strain OCh 114)).